The sequence spans 508 residues: Ras association domain-containing protein 10 (508 aa).

The Ras-associating domain maps to 1-133 (MDPSEKKISV…VRFVLVRSEA (133 aa)). 2 disordered regions span residues 51 to 81 (RRGL…AMPP) and 186 to 221 (KLNR…ESAS). Acidic residues predominate over residues 66–78 (EPPDENDEDDDDA). Residues 195–214 (PSSPCSSTSSSTASSCSSSA) are compositionally biased toward low complexity. 2 coiled-coil regions span residues 235–266 (QDHT…DRMR) and 319–358 (LEEL…NQRW). Residues 473–508 (GLAKSCPGNDEDSDTGLSSMHSQDSDSVPPVCESLV) are disordered. The span at 487-498 (TGLSSMHSQDSD) shows a compositional bias: polar residues.

In terms of tissue distribution, expressed in neural progenitor cells (at protein level).

Its subcellular location is the cytoplasm. The protein resides in the cytosol. It is found in the cytoskeleton. The protein localises to the microtubule organizing center. It localises to the centrosome. Its subcellular location is the spindle pole. Its function is as follows. Plays an important role in regulating embryonic neurogenesis. The sequence is that of Ras association domain-containing protein 10 (Rassf10) from Mus musculus (Mouse).